The chain runs to 346 residues: Methylthioribose-1-phosphate isomerase (346 aa).

Residues 48–50 (RGA), arginine 88, and glutamine 192 contribute to the substrate site. The Proton donor role is filled by aspartate 233. 243-244 (NK) lines the substrate pocket.

The protein belongs to the eIF-2B alpha/beta/delta subunits family. MtnA subfamily.

It carries out the reaction 5-(methylsulfanyl)-alpha-D-ribose 1-phosphate = 5-(methylsulfanyl)-D-ribulose 1-phosphate. It participates in amino-acid biosynthesis; L-methionine biosynthesis via salvage pathway; L-methionine from S-methyl-5-thio-alpha-D-ribose 1-phosphate: step 1/6. Its function is as follows. Catalyzes the interconversion of methylthioribose-1-phosphate (MTR-1-P) into methylthioribulose-1-phosphate (MTRu-1-P). The protein is Methylthioribose-1-phosphate isomerase of Alcanivorax borkumensis (strain ATCC 700651 / DSM 11573 / NCIMB 13689 / SK2).